The following is a 521-amino-acid chain: uncharacterized protein (521 aa).

The first 22 residues, 1-22 (MGFKLKGFGFLTLFASQAFLTA), serve as a signal peptide directing secretion. The N-palmitoyl cysteine moiety is linked to residue cysteine 23. Cysteine 23 is lipidated: S-diacylglycerol cysteine.

This sequence belongs to the MG067/MG068/MG395 family.

It localises to the cell membrane. This is an uncharacterized protein from Mycoplasma pneumoniae (strain ATCC 29342 / M129 / Subtype 1) (Mycoplasmoides pneumoniae).